We begin with the raw amino-acid sequence, 88 residues long: Sec-independent protein translocase protein TatA (88 aa).

The helical transmembrane segment at 3–23 (IFGVGLPEVTVILILALLIFG) threads the bilayer. The segment covering 56-66 (MKEEDKDESPK) has biased composition (basic and acidic residues). Positions 56 to 88 (MKEEDKDESPKSIESNQSNEINQEKIDSENSNN) are disordered. The span at 67 to 76 (SIESNQSNEI) shows a compositional bias: polar residues. A compositionally biased stretch (basic and acidic residues) spans 77–88 (NQEKIDSENSNN).

This sequence belongs to the TatA/E family. In terms of assembly, forms a complex with TatC.

Its subcellular location is the cell inner membrane. Functionally, part of the twin-arginine translocation (Tat) system that transports large folded proteins containing a characteristic twin-arginine motif in their signal peptide across membranes. TatA could form the protein-conducting channel of the Tat system. This chain is Sec-independent protein translocase protein TatA, found in Prochlorococcus marinus (strain MIT 9301).